The following is a 105-amino-acid chain: Defensin-like protein (105 aa).

The first 25 residues, 1-25 (MARSLCFMAFAILAMMLFVAYEVQA), serve as a signal peptide directing secretion. Cystine bridges form between cysteine 28–cysteine 72, cysteine 39–cysteine 59, cysteine 45–cysteine 66, and cysteine 49–cysteine 68.

This sequence belongs to the DEFL family. As to expression, flower. Found in petals, stamen and pistils, but not in sepals. In particular, accumulation in a configuration surrounding the inner reproductive whorls.

Its subcellular location is the secreted. It localises to the cell wall. It is found in the vacuole. Its function is as follows. Involved in floral organogenesis. May play a protective role in flowers by protecting the reproductive organs from potential pathogen attack. The protein is Defensin-like protein (FST) of Nicotiana tabacum (Common tobacco).